The following is a 242-amino-acid chain: Myogenic factor 6 (242 aa).

The interval Ser31 to Leu63 is disordered. Residues Gly39–Ser56 are compositionally biased toward polar residues. Positions Asp93–Leu144 constitute a bHLH domain.

In terms of assembly, efficient DNA binding requires dimerization with another bHLH protein. Interacts with CSRP3. As to expression, skeletal muscle.

It is found in the nucleus. In terms of biological role, involved in muscle differentiation (myogenic factor). Induces fibroblasts to differentiate into myoblasts. Probable sequence specific DNA-binding protein. The polypeptide is Myogenic factor 6 (Myf6) (Mus musculus (Mouse)).